Reading from the N-terminus, the 169-residue chain is Oleosin Cor a 15 (169 aa).

2 helical membrane passes run 38–58 and 70–90; these read IAVVTLLPLGGFLLLLAGLTF and PLFVLCSPVLVPAAIVIGLAV. A Proline-knot motif is present at residues 70–81; it reads PLFVLCSPVLVP. Basic and acidic residues-rich tracts occupy residues 122–131 and 160–169; these read QMEHAKRRAQ and EGGRGEEKKT. Positions 122–169 are disordered; the sequence is QMEHAKRRAQDTAGHLGQKARETGQTVTGKGQEAGKTLEGGRGEEKKT.

The protein belongs to the oleosin family. Expressed in seeds (at protein level).

It is found in the lipid droplet. Its subcellular location is the membrane. In terms of biological role, may have a structural role to stabilize the lipid body during desiccation of the seed by preventing coalescence of the oil. Probably interacts with both lipid and phospholipid moieties of lipid bodies. May also provide recognition signals for specific lipase anchorage in lipolysis during seedling growth. This is Oleosin Cor a 15 from Corylus avellana (European hazel).